A 718-amino-acid chain; its full sequence is Mitotic spindle assembly checkpoint protein MAD1 (718 aa).

M1 carries the N-acetylmethionine modification. Phosphoserine is present on S16. The stretch at 46 to 632 forms a coiled coil; sequence QQSMQLEERA…QTKIQEFRKA (587 aa). The residue at position 61 (K61) is an N6-acetyllysine; alternate. K61 participates in a covalent cross-link: Glycyl lysine isopeptide (Lys-Gly) (interchain with G-Cter in SUMO2); alternate. The Nuclear localization signal motif lies at 79–82; that stretch reads KRAR. S214 is modified (phosphoserine). The important for interaction with IK stretch occupies residues 301–340; sequence VGLELENERLLAKLQSWERLDQTMGLSIRTPEDLSRFVVE. Residues 380-532 form a necessary for interaction with NEK2 region; it reads LLEERKKRET…EAQLERRALQ (153 aa). A Phosphoserine modification is found at S428. Residues 439 to 480 form an important for interaction with IK region; the sequence is EDMVQKVHSHSAEMEAQLSQALEELGGQKQRADMLEMELKML. Residues 540-551 are necessary for interaction with MAD2L1; the sequence is TKVLHMSLNPTS. Phosphoserine is present on residues S598 and S610. Position 634 is a phosphotyrosine (Y634). The residue at position 716 (T716) is a Phosphothreonine.

This sequence belongs to the MAD1 family. In terms of assembly, homodimer. Dimerizes via its N- and C- terminal regions. Heterodimerizes with MAD2L1 in order to form a tetrameric MAD1L1-MAD2L1 core complex. Interacts with the closed conformation form of MAD2L1 (C-MAD2) and open conformation form of MAD2L1 (O-MAD2). It is unclear whether MAD1L1 dimerization promotes the conversion of closed to open conformation of MAD2L1. Formation of a heterotetrameric core complex containing two molecules each of MAD1L1 and of MAD2L1 promotes binding of another molecule of MAD2L1 to each MAD2L1, resulting in a heterohexamer. Perturbation of the original MAD1L1-MAD2L1 structure by the spindle checkpoint may decrease MAD2L1 affinity for MAD1L1. CDC20 can compete with MAD1L1 for MAD2L1 binding, until the attachment and/or tension dampen the checkpoint signal, preventing further release of MAD2L1 on to CDC20. Also able to interact with the BUB1/BUB3 complex. Interacts with NEK2. Interacts with TTK. Interacts with TPR; the interactions occurs in a microtubule-independent manner. Interacts with IK. Interacts with the viral Tax protein. Interacts with PRAP1. As to quaternary structure, interacts with MAD2L1; this interaction leads to the cytoplasmic sequestration of MAD2L1. Interacts with PRAP1. Phosphorylated; by BUB1. Become hyperphosphorylated in late S through M phases or after mitotic spindle damage. Phosphorylated; by TTK. As to expression, expressed in hepatocellular carcinomas and hepatoma cell lines (at protein level).

Its subcellular location is the nucleus. It localises to the chromosome. The protein resides in the centromere. It is found in the kinetochore. The protein localises to the nucleus envelope. Its subcellular location is the cytoplasm. It localises to the cytoskeleton. The protein resides in the microtubule organizing center. It is found in the centrosome. The protein localises to the spindle. Its subcellular location is the spindle pole. Component of the spindle-assembly checkpoint that prevents the onset of anaphase until all chromosomes are properly aligned at the metaphase plate. Forms a heterotetrameric complex with the closed conformation form of MAD2L1 (C-MAD2) at unattached kinetochores during prometaphase, recruits an open conformation of MAD2L1 (O-MAD2) and promotes the conversion of O-MAD2 to C-MAD2, which ensures mitotic checkpoint signaling. In terms of biological role, sequesters MAD2L1 in the cytoplasm preventing its function as an activator of the mitotic spindle assembly checkpoint (SAC) resulting in SAC impairment and chromosomal instability in hepatocellular carcinomas. This is Mitotic spindle assembly checkpoint protein MAD1 (MAD1L1) from Homo sapiens (Human).